Here is a 446-residue protein sequence, read N- to C-terminus: Methionine aminopeptidase 2-3 (446 aa).

The disordered stretch occupies residues 14-116 (ITDAGANGAD…ENRYRTTSEE (103 aa)). The span at 61 to 76 (AKKKKNKKRKPKKKQP) shows a compositional bias: basic residues. The segment covering 86–96 (PLSQLFPNNSY) has biased composition (polar residues). Residues 98-116 (KGEEVEYKDENRYRTTSEE) show a composition bias toward basic and acidic residues. His199 is a binding site for substrate. A divalent metal cation is bound by residues Asp219, Asp230, and His299. His307 contacts substrate. Glu332 and Glu427 together coordinate a divalent metal cation.

It belongs to the peptidase M24A family. Methionine aminopeptidase eukaryotic type 2 subfamily. Co(2+) serves as cofactor. It depends on Zn(2+) as a cofactor. Mn(2+) is required as a cofactor. The cofactor is Fe(2+).

It is found in the cytoplasm. It carries out the reaction Release of N-terminal amino acids, preferentially methionine, from peptides and arylamides.. Cotranslationally removes the N-terminal methionine from nascent proteins. The N-terminal methionine is often cleaved when the second residue in the primary sequence is small and uncharged (Met-Ala-, Cys, Gly, Pro, Ser, Thr, or Val). In Aspergillus fumigatus (strain CBS 144.89 / FGSC A1163 / CEA10) (Neosartorya fumigata), this protein is Methionine aminopeptidase 2-3.